We begin with the raw amino-acid sequence, 2792 residues long: E3 ubiquitin-protein ligase UBR5 (2792 aa).

The residue at position 2 (Thr2) is an N-acetylthreonine. A compositionally biased stretch (basic and acidic residues) spans 77–88; the sequence is DRLELGKPDNND. Positions 77 to 175 are disordered; sequence DRLELGKPDN…DRGSGLLGSQ (99 aa). A compositionally biased stretch (low complexity) spans 94 to 111; the sequence is SSSGTGRTSRPGRTSDSP. The residue at position 110 (Ser110) is a Phosphoserine. Residues 135–144 are compositionally biased toward gly residues; the sequence is GVGGSGGGSS. Residues 184 to 226 form the UBA domain; the sequence is VIPEELISQAQVVLQGKSRSVIIRELQRTNLDVNLAVNNLLSR. A Phosphoserine modification is found at Ser321. Over residues 322 to 341 the composition is skewed to basic and acidic residues; that stretch reads FDNERGSTSKEGESNPDKKN. The tract at residues 322–347 is disordered; it reads FDNERGSTSKEGESNPDKKNTPVQSP. 2 positions are modified to phosphoserine: Ser346 and Ser572. Positions 577 to 598 are enriched in basic and acidic residues; it reads KSMEKASKTLETKPESKQEPVK. Positions 577–642 are disordered; the sequence is KSMEKASKTL…APREEEKVNE (66 aa). Ser606 carries the phosphoserine modification. Over residues 608–622 the composition is skewed to low complexity; the sequence is ASTCSDASSIASSAS. Thr631 carries the phosphothreonine modification. A phosphoserine mark is found at Ser802, Ser922, and Ser1012. Disordered stretches follow at residues 993 to 1029 and 1046 to 1069; these read AGLG…SMDP and TAAT…EPSV. Residues 1011–1027 are compositionally biased toward pro residues; that stretch reads VSPPIAPPSWVPDPPSM. Residues 1046–1067 are compositionally biased toward polar residues; the sequence is TAATGSGQGPSTSTIPGPSTEP. Thr1109 and Thr1129 each carry phosphothreonine. A UBR-type zinc finger spans residues 1171 to 1239; that stretch reads DTCSFTWTGA…EKCKCKTLIA (69 aa). Phosphoserine is present on residues Ser1221, Ser1302, Ser1349, Ser1369, and Ser1475. The interval 1293–1312 is disordered; it reads REDRNRKTASPEDSDMPDHD. Residues 1509-1734 are disordered; sequence SVEPLPPRPS…PSSTSTPAAS (226 aa). Over residues 1518-1531 the composition is skewed to low complexity; it reads SSDQASSSSQSQSS. The segment covering 1532-1547 has biased composition (polar residues); that stretch reads YIIRNPQQRRISQSQP. Ser1543 bears the Phosphoserine mark. 2 stretches are compositionally biased toward acidic residues: residues 1553 to 1568 and 1599 to 1608; these read EEQD…EVEV and HDEDGSDMEL. The segment covering 1623–1632 has biased composition (polar residues); the sequence is NHSNQDNASG. Composition is skewed to low complexity over residues 1635 to 1651, 1662 to 1675, and 1720 to 1734; these read SVVT…ASSV, SNDS…SSQS, and AAST…PAAS. Thr1730 carries the post-translational modification Phosphothreonine. Ser1735 bears the Phosphoserine mark. Tyr1740 carries the phosphotyrosine modification. Residue Ser1774 is modified to Phosphoserine. The segment at 1853–1884 is disordered; it reads LASAGDPGHPNHPLHASQNSARRERMTAREEA. The span at 1873–1884 shows a compositional bias: basic and acidic residues; sequence ARRERMTAREEA. Thr1963 is modified (phosphothreonine). A disordered region spans residues 1978 to 2015; the sequence is GIDNEDSEHENDDDTSQSATLNDKDDDSLPAETGQNHP. Residues 1979–1992 show a composition bias toward acidic residues; it reads IDNEDSEHENDDDT. Residues Ser1984, Ser2020, and Ser2022 each carry the phosphoserine modification. Phosphothreonine is present on Thr2024. Ser2070 is modified (phosphoserine). Positions 2111 to 2137 are disordered; the sequence is RQKKEGEEQSLLAEEADSSKPGPSAPD. Thr2207 is subject to Phosphothreonine. Phosphoserine is present on residues Ser2235 and Ser2283. The tract at residues 2317–2387 is disordered; sequence HTSLMQRLRN…SDDPDPLPAH (71 aa). 2 stretches are compositionally biased toward basic and acidic residues: residues 2326-2342 and 2350-2362; these read NRGE…EMRR and SRRD…RRQL. The region spanning 2371-2448 is the PABC domain; that stretch reads PASEGNPSDD…AMELIIAHGR (78 aa). One can recognise an HECT domain in the interval 2455–2792; the sequence is ILDLGLLDSS…AIKTKNFGFV (338 aa). A phosphoserine mark is found at Ser2463, Ser2477, and Ser2479. A disordered region spans residues 2467–2494; it reads VQENRKRHGSSRSVVDMDLEDTDDGDDN. Positions 2483-2493 are enriched in acidic residues; sequence MDLEDTDDGDD. Cys2761 serves as the catalytic Glycyl thioester intermediate.

It belongs to the UBR5 family. In terms of assembly, homotetramer; composed of a dimer of dimers. Associates with CDK9 and TFIIS/TCEA1 and forms a transcription regulatory complex made of CDK9, RNAP II, UBR5 and TFIIS/TCEA1 that can stimulate target gene transcription (e.g. gamma fibrinogen/FGG) by recruiting their promoters. Associates with the E3 ligase complex containing DYRK2, EDD/UBR5, DDB1 and DCAF1 proteins (EDVP complex). Binds TOPBP1. Interacts with PIH1D1. Interacts with CIB1.

The protein localises to the nucleus. The protein resides in the cytoplasm. It carries out the reaction S-ubiquitinyl-[E2 ubiquitin-conjugating enzyme]-L-cysteine + [acceptor protein]-L-lysine = [E2 ubiquitin-conjugating enzyme]-L-cysteine + N(6)-ubiquitinyl-[acceptor protein]-L-lysine.. The protein operates within protein modification; protein ubiquitination. E3 ubiquitin-protein ligase involved in different protein quality control pathways in the cytoplasm and nucleus. Mainly acts as a ubiquitin chain elongator that extends pre-ubiquitinated substrates. Component of the N-end rule pathway: ubiquitinates proteins bearing specific N-terminal residues that are destabilizing according to the N-end rule, leading to their degradation. Recognizes type-1 N-degrons, containing positively charged amino acids (Arg, Lys and His). Together with UBR4, part of a cytoplasm protein quality control pathway that prevents protein aggregation by catalyzing assembly of heterotypic 'Lys-11'-/'Lys-48'-linked branched ubiquitin chains on aggregated proteins, leading to substrate recognition by the segregase p97/VCP and degradation by the proteasome: UBR5 is probably branching multiple 'Lys-48'-linked chains of substrates initially modified with mixed conjugates by UBR4. Together with ITCH, catalyzes 'Lys-48'-/'Lys-63'-branched ubiquitination of TXNIP, leading to its degradation: UBR5 mediates branching of 'Lys-48'-linked chains of substrates initially modified with 'Lys-63'-linked conjugates by ITCH. Catalytic component of a nuclear protein quality control pathway that mediates ubiquitination and degradation of unpaired transcription factors (i.e. transcription factors that are not assembled into functional multiprotein complexes): specifically recognizes and binds degrons that are not accessible when transcription regulators are associated with their coactivators. Ubiquitinates various unpaired transcription regulator (MYC, SUPT4H1, SUPT5H, CDC20 and MCRS1), as well as ligand-bound nuclear receptors (ESR1, NR1H3, NR3C1, PGR, RARA, RXRA AND VDR) that are not associated with their nuclear receptor coactivators (NCOAs). Involved in maturation and/or transcriptional regulation of mRNA by mediating polyubiquitination and activation of CDK9. Also acts as a regulator of DNA damage response by acting as a suppressor of RNF168, an E3 ubiquitin-protein ligase that promotes accumulation of 'Lys-63'-linked histone H2A and H2AX at DNA damage sites, thereby acting as a guard against excessive spreading of ubiquitinated chromatin at damaged chromosomes. Regulates DNA topoisomerase II binding protein (TopBP1) in the DNA damage response. Ubiquitinates acetylated PCK1. Acts as a positive regulator of the canonical Wnt signaling pathway by mediating (1) ubiquitination and stabilization of CTNNB1, and (2) 'Lys-48'-linked ubiquitination and degradation of TLE3. Promotes disassembly of the mitotic checkpoint complex (MCC) from the APC/C complex by catalyzing ubiquitination of BUB1B, BUB3 and CDC20. Plays an essential role in extraembryonic development. Required for the maintenance of skeletal tissue homeostasis by acting as an inhibitor of hedgehog (HH) signaling. The polypeptide is E3 ubiquitin-protein ligase UBR5 (Mus musculus (Mouse)).